We begin with the raw amino-acid sequence, 79 residues long: Small ribosomal subunit protein bS16 (79 aa).

This sequence belongs to the bacterial ribosomal protein bS16 family.

This Oleidesulfovibrio alaskensis (strain ATCC BAA-1058 / DSM 17464 / G20) (Desulfovibrio alaskensis) protein is Small ribosomal subunit protein bS16.